A 395-amino-acid chain; its full sequence is Succinyl-diaminopimelate desuccinylase (395 aa).

His-74 serves as a coordination point for Zn(2+). Residue Asp-76 is part of the active site. Asp-107 is a binding site for Zn(2+). Catalysis depends on Glu-141, which acts as the Proton acceptor. Zn(2+) contacts are provided by Glu-142, Glu-170, and His-368.

This sequence belongs to the peptidase M20A family. DapE subfamily. Homodimer. Zn(2+) is required as a cofactor. It depends on Co(2+) as a cofactor.

The catalysed reaction is N-succinyl-(2S,6S)-2,6-diaminopimelate + H2O = (2S,6S)-2,6-diaminopimelate + succinate. The protein operates within amino-acid biosynthesis; L-lysine biosynthesis via DAP pathway; LL-2,6-diaminopimelate from (S)-tetrahydrodipicolinate (succinylase route): step 3/3. Functionally, catalyzes the hydrolysis of N-succinyl-L,L-diaminopimelic acid (SDAP), forming succinate and LL-2,6-diaminopimelate (DAP), an intermediate involved in the bacterial biosynthesis of lysine and meso-diaminopimelic acid, an essential component of bacterial cell walls. In Brucella melitensis biotype 2 (strain ATCC 23457), this protein is Succinyl-diaminopimelate desuccinylase.